We begin with the raw amino-acid sequence, 597 residues long: MQHIRNFSIIAHIDHGKSTLADRLIQRCGGLAAREMSAQVLDSMEIERERGITIKAQTAALQYQAQDGKTYNLNLIDTPGHVDFSYEVSRSLSACEGALLVVDASQGVEAQTVANCYTAIELGVEVLPVLNKMDLPQADPDAARQEVEDVIGIDASNAVLASAKTGMGIDEILETIVARVPAPQGNPDGALQALIIDSWFDNYVGVVMLVRIINGVLRPKDKILLMASGATHLCEQVGVFTPKSQPRTELSAGEVGFIIAGIKELAHAKVGDTVTLAGKPANAPLPGFKEVKPQVFAGLYPVESSEYDQLRDSLEKLKLNDAALMFEPEVSQALGFGFRCGFLGLLHMEIVQERLEREFDMDIITTAPSVVYEVEQRDGSIEIVDSPARMPEVGKIADIREPIVKVTLFMPQEYVGPVMTLCNNKRGVQINMSYHGRQVHLTYEIPLAEIVLDFFDKLKSVSRGYASMDYEFLEYRSADVVRVDLLINGDRVDALAMIVHRANARYRARDVVTRMRGLIPRQMFDVAIQAAIGAEVIARENVKALRKNVLAKCYGGDITRKKKLLEKQKAGKKRMKQVGSVEIPQEAFLAILQVEDK.

The tr-type G domain occupies 2 to 184; that stretch reads QHIRNFSIIA…TIVARVPAPQ (183 aa). Residues 14-19 and 131-134 each bind GTP; these read DHGKST and NKMD.

It belongs to the TRAFAC class translation factor GTPase superfamily. Classic translation factor GTPase family. LepA subfamily.

It localises to the cell inner membrane. It catalyses the reaction GTP + H2O = GDP + phosphate + H(+). Required for accurate and efficient protein synthesis under certain stress conditions. May act as a fidelity factor of the translation reaction, by catalyzing a one-codon backward translocation of tRNAs on improperly translocated ribosomes. Back-translocation proceeds from a post-translocation (POST) complex to a pre-translocation (PRE) complex, thus giving elongation factor G a second chance to translocate the tRNAs correctly. Binds to ribosomes in a GTP-dependent manner. This is Elongation factor 4 from Bordetella petrii (strain ATCC BAA-461 / DSM 12804 / CCUG 43448).